Here is a 338-residue protein sequence, read N- to C-terminus: Lipoate-protein ligase A (338 aa).

The region spanning 29–216 (PADQRVLFLW…AYCEHYQQQV (188 aa)) is the BPL/LPL catalytic domain. Residues Arg-71, 76 to 79 (GAVF), and Lys-134 contribute to the ATP site. A (R)-lipoate-binding site is contributed by Lys-134.

Belongs to the LplA family. Monomer.

The protein resides in the cytoplasm. The enzyme catalyses L-lysyl-[lipoyl-carrier protein] + (R)-lipoate + ATP = N(6)-[(R)-lipoyl]-L-lysyl-[lipoyl-carrier protein] + AMP + diphosphate + H(+). It functions in the pathway protein modification; protein lipoylation via exogenous pathway; protein N(6)-(lipoyl)lysine from lipoate: step 1/2. It participates in protein modification; protein lipoylation via exogenous pathway; protein N(6)-(lipoyl)lysine from lipoate: step 2/2. Catalyzes both the ATP-dependent activation of exogenously supplied lipoate to lipoyl-AMP and the transfer of the activated lipoyl onto the lipoyl domains of lipoate-dependent enzymes. The sequence is that of Lipoate-protein ligase A from Vibrio cholerae serotype O1 (strain ATCC 39541 / Classical Ogawa 395 / O395).